The primary structure comprises 317 residues: CTP-dependent diacylglycerol kinase 1 (317 aa).

The tract at residues 1-44 (MANEEELQTAESAFVTGARRYSNDYSESESSSKHSGCSTPVEGT) is disordered. The Lumenal portion of the chain corresponds to 1 to 130 (MANEEELQTA…DVDYRNVRLP (130 aa)). The span at 23-38 (NDYSESESSSKHSGCS) shows a compositional bias: low complexity. Residues 131–151 (LIVGFVHVLLLDVIRLHWPAF) form a helical membrane-spanning segment. Residues 152–167 (NTLYCQVTGLLMRKKE) are Cytoplasmic-facing. The chain crosses the membrane as a helical span at residues 168-188 (VHTYNGVLWYLLGLIFAFSFF). The Lumenal portion of the chain corresponds to 189-190 (SK). The chain crosses the membrane as a helical span at residues 191 to 211 (DVALVSLFLLSWCDTAASTVG). Topologically, residues 212 to 230 (RLYGHLTPRISRNKSLAGS) are cytoplasmic. The helical transmembrane segment at 231–251 (LAAFVVGVISCAVFYGYFVPA) threads the bilayer. The Lumenal portion of the chain corresponds to 252–271 (YSHVNHPGEIMWNPETSRLS). The helical transmembrane segment at 272 to 292 (LVQLSLLGGFVASLSEGIDLF) threads the bilayer. Residue Asn-293 is a topological domain, cytoplasmic. A helical transmembrane segment spans residues 294–314 (WDDNFTIPVLSAIFMHTIIAF). Topologically, residues 315–317 (SQR) are lumenal.

This sequence belongs to the DGK1 family. The cofactor is Ca(2+). Mg(2+) serves as cofactor.

It is found in the endoplasmic reticulum membrane. The protein localises to the nucleus membrane. It carries out the reaction a 1,2-diacyl-sn-glycerol + CTP = a 1,2-diacyl-sn-glycero-3-phosphate + CDP + H(+). Its function is as follows. CTP-dependent diacylglycerol kinase that catalyzes the phosphorylation of diacylglycerol (DAG) to phosphatidate (PA). Controls phosphatidate levels at the nuclear envelope. May be involved in vesicle trafficking between the endoplasmic reticulum and the Golgi apparatus. The polypeptide is CTP-dependent diacylglycerol kinase 1 (DGK1) (Eremothecium gossypii (strain ATCC 10895 / CBS 109.51 / FGSC 9923 / NRRL Y-1056) (Yeast)).